We begin with the raw amino-acid sequence, 479 residues long: Preferentially expressed antigen in melanoma-like protein 7 (479 aa).

One copy of the LRR 1; degenerate repeat lies at 96–124 (MGRLKKVDFRDAQHHASLDMQDEREGRDY). Residues 179-203 (HLCCEKLEIGAVEVSKVRNVLKFLQ) form an LRR 2; degenerate repeat. An LRR 3; degenerate repeat occupies 204-230 (PELIKELKLNTVGNLSKLAKFVPFIRK). The stretch at 231–265 (MRNLQKLMLVRTFGTRTFTQEEKQNISKIISLFCK) is one LRR 4; degenerate repeat. LRR repeat units follow at residues 266-291 (LSCLRHLTIDDVYFLTDQMKELLRCL), 292-323 (EAPLVSLKITLCQLSQSDLESFAQRWNYSQLK), 324-347 (HLCLRGVTLTNLDVTPLRDFLKRV), 348-375 (AANLQTLDLEDCRMDDSHFRTLLPALIK), and 376-400 (CTQLTSINLYDNDISEDVLENFLHR).

Belongs to the PRAME family. As to quaternary structure, interacts with UHRF1. As to expression, seems to be specific to pluripotent tissues in the early embryo. Not detected in somatic tissues.

Its function is as follows. Promotes maintenance and self-renewal of pluripotent embryonic stem cells (ESCs), downstream of LIF/STAT3. Maintains the pluripotency state of ESCs by repressing DNA methylation through the regulation of UHRF1 stability. Mediates the proteasomal degradation of UHRF1. Is required for the establishment of the blastocyst. The polypeptide is Preferentially expressed antigen in melanoma-like protein 7 (Mus musculus (Mouse)).